The sequence spans 832 residues: Serine/threonine-protein kinase Doa (832 aa).

4 disordered regions span residues 1 to 86 (MVAA…SKYI), 135 to 158 (LLQH…QQYP), 179 to 215 (SDPF…KQAP), and 258 to 419 (SKIG…QLQQ). Residues 8-18 (VPTSSSSSAAT) show a composition bias toward polar residues. Positions 20–32 (RQKDVDNKLEKCL) are enriched in basic and acidic residues. 3 stretches are compositionally biased toward low complexity: residues 40–53 (TSSN…SNNN), 137–158 (QHQQ…QQYP), and 183–203 (MQQQ…KLQQ). Polar residues predominate over residues 271–282 (HSASFSSAQRPT). Low complexity-rich tracts occupy residues 285-310 (QFHQ…QHQH), 347-365 (QMQP…TQFQ), and 396-419 (SSSS…QLQQ). In terms of domain architecture, Protein kinase spans 479–799 (YKIMATLGEG…LGEALHHPFF (321 aa)). Residues 485 to 493 (LGEGTFGRV) and lysine 508 each bind ATP. Catalysis depends on aspartate 605, which acts as the Proton acceptor. A disordered region spans residues 809-832 (GEVSNKQPLSSGSSSRERSHSLSR). The span at 823 to 832 (SRERSHSLSR) shows a compositional bias: basic and acidic residues.

It belongs to the protein kinase superfamily. CMGC Ser/Thr protein kinase family. Lammer subfamily. Interacts (via N-terminus) with x16 (via Arg/Ser-rich region). Interacts with eEF1gamma (via C-terminus); the interaction is probably direct, is transient and leads to phosphorylation of eEF1gamma by Doa. The cofactor is Mg(2+). Autophosphorylated on serine, threonine and tyrosine residues. As to expression, ubiquitous expression in embryos. Stage 17 embryos show elevated expression in CNS and brain. Ubiquitous expression in larval imaginal disks. Increased expression posterior to the eye-antennal disk morphogenetic furrow.

Its subcellular location is the cytoplasm. The protein resides in the cytosol. The protein localises to the nucleus. It catalyses the reaction L-seryl-[protein] + ATP = O-phospho-L-seryl-[protein] + ADP + H(+). The catalysed reaction is L-threonyl-[protein] + ATP = O-phospho-L-threonyl-[protein] + ADP + H(+). It carries out the reaction L-tyrosyl-[protein] + ATP = O-phospho-L-tyrosyl-[protein] + ADP + H(+). Its function is as follows. Dual specificity kinase involved in the negative regulation of microtubule-based transport through phsophorylation of the microtuble-binding protein eEF1gamma. May function in the control of alternative splicing by phosphorylating serine/arginine-rich splicing factors, the SR proteins, including x16. Negative regulator of the copia retrotransposon element of the white (w) gene. In the eye, it is required for normal pigmentation, photoreceptor cell development and for organization of interommatidial bristles. Also essential for embryonic segmentation and differentiation of the nervous system. Functionally, may be the specific isoform involved in regulation of microtubule-based transport through phosphorylation of the microtubule binding protein eEF1gamma. This chain is Serine/threonine-protein kinase Doa, found in Drosophila melanogaster (Fruit fly).